Reading from the N-terminus, the 353-residue chain is Photosystem II D2 protein (353 aa).

Thr-2 carries the N-acetylthreonine modification. Thr-2 carries the phosphothreonine modification. The chain crosses the membrane as a helical span at residues 41 to 61 (CAYFAVGGWFTGTTFVTSWYT). His-118 contacts chlorophyll a. The helical transmembrane segment at 125–141 (GFMLRQFELARSVQLRP) threads the bilayer. 2 residues coordinate pheophytin a: Gln-130 and Asn-143. The chain crosses the membrane as a helical span at residues 153–166 (VFVSVFLIYPLGQS). His-198 provides a ligand contact to chlorophyll a. A helical membrane pass occupies residues 208-228 (AALLCAIHGATVENTLFEDGD). A plastoquinone-binding residues include His-215 and Phe-262. His-215 contributes to the Fe cation binding site. His-269 is a binding site for Fe cation. Residues 279–295 (GLWMSALGVVGLALNLR) form a helical membrane-spanning segment.

Belongs to the reaction center PufL/M/PsbA/D family. As to quaternary structure, PSII is composed of 1 copy each of membrane proteins PsbA, PsbB, PsbC, PsbD, PsbE, PsbF, PsbH, PsbI, PsbJ, PsbK, PsbL, PsbM, PsbT, PsbX, PsbY, PsbZ, Psb30/Ycf12, at least 3 peripheral proteins of the oxygen-evolving complex and a large number of cofactors. It forms dimeric complexes. Requires The D1/D2 heterodimer binds P680, chlorophylls that are the primary electron donor of PSII, and subsequent electron acceptors. It shares a non-heme iron and each subunit binds pheophytin, quinone, additional chlorophylls, carotenoids and lipids. There is also a Cl(-1) ion associated with D1 and D2, which is required for oxygen evolution. The PSII complex binds additional chlorophylls, carotenoids and specific lipids. as cofactor.

It localises to the plastid. The protein resides in the chloroplast thylakoid membrane. The enzyme catalyses 2 a plastoquinone + 4 hnu + 2 H2O = 2 a plastoquinol + O2. Its function is as follows. Photosystem II (PSII) is a light-driven water:plastoquinone oxidoreductase that uses light energy to abstract electrons from H(2)O, generating O(2) and a proton gradient subsequently used for ATP formation. It consists of a core antenna complex that captures photons, and an electron transfer chain that converts photonic excitation into a charge separation. The D1/D2 (PsbA/PsbD) reaction center heterodimer binds P680, the primary electron donor of PSII as well as several subsequent electron acceptors. D2 is needed for assembly of a stable PSII complex. The polypeptide is Photosystem II D2 protein (Cucumis sativus (Cucumber)).